The following is a 131-amino-acid chain: Transcription antitermination protein NusB (131 aa).

It belongs to the NusB family.

Functionally, involved in transcription antitermination. Required for transcription of ribosomal RNA (rRNA) genes. Binds specifically to the boxA antiterminator sequence of the ribosomal RNA (rrn) operons. The protein is Transcription antitermination protein NusB of Bacillus pumilus (strain SAFR-032).